We begin with the raw amino-acid sequence, 336 residues long: MLEYILWTALYVLLIVIPLILVVAYYTYAERKVIGYMQDRIGPNRVGSFGLLQPIFDALKLFLKEIIVPTNSNRYLFFIAPILAFAPAYAAWAVIPFSKGVVLSDMNLGLLYILAMTSFSVYGIVIAGWASNSKYSLFGALRAGAQVVSYELAMGFAIVGVVIAAGSMGITGIIESQAGGLWHWYFIPLFPLFVVYFIAGIAETNRAPFDVVEGESEIIAGHHIEYTGSRFALFFLAEYANMILISILTSIMFLGGWCSPFEATPLEAVFNFVPGVVWLFAKTGIFMFMFLWVRATFPRYRYDQIMRLGWKIFIPLTFVWVVVVACMVRFGVGPWW.

8 helical membrane-spanning segments follow: residues 4–24 (YILWTALYVLLIVIPLILVVA), 75–95 (YLFFIAPILAFAPAYAAWAVI), 108–128 (LGLLYILAMTSFSVYGIVIAG), 154–174 (MGFAIVGVVIAAGSMGITGII), 181–201 (LWHWYFIPLFPLFVVYFIAGI), 233–253 (LFFLAEYANMILISILTSIMF), 272–292 (FVPGVVWLFAKTGIFMFMFLW), and 308–328 (LGWKIFIPLTFVWVVVVACMV).

Belongs to the complex I subunit 1 family. NDH-1 is composed of 14 different subunits. Subunits NuoA, H, J, K, L, M, N constitute the membrane sector of the complex.

The protein localises to the cell inner membrane. It catalyses the reaction a quinone + NADH + 5 H(+)(in) = a quinol + NAD(+) + 4 H(+)(out). NDH-1 shuttles electrons from NADH, via FMN and iron-sulfur (Fe-S) centers, to quinones in the respiratory chain. The immediate electron acceptor for the enzyme in this species is believed to be ubiquinone. Couples the redox reaction to proton translocation (for every two electrons transferred, four hydrogen ions are translocated across the cytoplasmic membrane), and thus conserves the redox energy in a proton gradient. This subunit may bind ubiquinone. The chain is NADH-quinone oxidoreductase subunit H from Francisella philomiragia subsp. philomiragia (strain ATCC 25017 / CCUG 19701 / FSC 153 / O#319-036).